The primary structure comprises 100 residues: High mobility group protein C (100 aa).

Positions 12-80 form a DNA-binding region, HMG box; sequence PKRPLSAFFL…KYEKDMQAYE (69 aa). Residues 81-100 are disordered; the sequence is KKYGKPEKQKKIKKNKKGSK. The segment covering 90–100 has biased composition (basic residues); that stretch reads KKIKKNKKGSK.

The protein localises to the nucleus. Its subcellular location is the chromosome. The sequence is that of High mobility group protein C from Tetrahymena thermophila.